Reading from the N-terminus, the 72-residue chain is uncharacterized protein (72 aa).

A helical transmembrane segment spans residues 41–58; that stretch reads FSFLVHIMCGLTLTSYVI.

The protein localises to the membrane. This is an uncharacterized protein from Dictyostelium discoideum (Social amoeba).